Consider the following 459-residue polypeptide: Transcriptional coactivator YAP1-A (459 aa).

Low complexity predominate over residues 1–13 (MEPGSQQQPSAPA). The segment at 1 to 22 (MEPGSQQQPSAPAQQPPPVGHQ) is disordered. Phosphoserine; by LATS1 and LATS2 is present on residues S30, S80, S98, and S134. Disordered regions lie at residues 65–99 (FKQPQPEAKSHSRQASTDGGSAGALTPQHVRAHSS) and 126–145 (SAPHLRQSSYEIPDDVPLPP). 2 consecutive WW domains span residues 141–174 (VPLPPGWEMAKTPSGQRYFLNHIDQTTTWQDPRK) and 199–232 (GPLPDGWEQALTPEGEAYFINHKNKSTSWLDPRL). The tract at residues 246–268 (NAPVKAPPALPPPSPQTGVLGSG) is disordered. Positions 250 to 260 (KAPPALPPPSP) are enriched in pro residues. A transactivation domain region spans residues 261–459 (QTGVLGSGGN…LDKESFLTWL (199 aa)). The stretch at 269 to 297 (GNQQMRLQQLQMEKERLRLKHQELLRQVR) forms a coiled coil. Residues 344–363 (GTYHSRDESTESGLSMSSYS) are disordered. Residues 354–363 (ESGLSMSSYS) show a composition bias toward polar residues.

Belongs to the YAP1 family. As to quaternary structure, interacts with tead1. Post-translationally, phosphorylated by lats1 and lats2; leading to cytoplasmic translocation and inactivation.

The protein localises to the cytoplasm. It is found in the nucleus. It localises to the cell junction. Its subcellular location is the tight junction. The protein resides in the cell membrane. Its function is as follows. Transcriptional regulator which can act both as a coactivator and a corepressor and is the critical downstream regulatory target in the Hippo signaling pathway that plays a pivotal role in organ size control and tumor suppression by restricting proliferation and promoting apoptosis. Plays a key role in tissue tension and 3D tissue shape by regulating cortical actomyosin network formation. Required for expansion of the neural plate and neural plate border zone progenitor pools. Acts as a direct regulator of pax3 expression via interaction with tead1. The protein is Transcriptional coactivator YAP1-A of Xenopus laevis (African clawed frog).